Reading from the N-terminus, the 176-residue chain is MDLPGPIHDFLLVFLGSGLIVGGLGVVLLPNPIFSAFSLGFVLVCISLLYILANSHFVAAAQLLIYVGAINVLIIFAVMFMNDSEYFTDFNLWTVGDGITSLVCTTLLFSLISTILDTSWYGVIWTTRLNQILEQDLISNSQQIGSHLSTDFFLPFELISIILLVALIGAISVARQ.

Helical transmembrane passes span 10-30, 33-53, 61-81, 92-112, and 152-172; these read FLLV…VLLP, IFSA…YILA, AQLL…VMFM, LWTV…FSLI, and FFLP…GAIS.

It belongs to the complex I subunit 6 family. In terms of assembly, NDH is composed of at least 16 different subunits, 5 of which are encoded in the nucleus.

Its subcellular location is the plastid. The protein localises to the chloroplast thylakoid membrane. The enzyme catalyses a plastoquinone + NADH + (n+1) H(+)(in) = a plastoquinol + NAD(+) + n H(+)(out). It carries out the reaction a plastoquinone + NADPH + (n+1) H(+)(in) = a plastoquinol + NADP(+) + n H(+)(out). In terms of biological role, NDH shuttles electrons from NAD(P)H:plastoquinone, via FMN and iron-sulfur (Fe-S) centers, to quinones in the photosynthetic chain and possibly in a chloroplast respiratory chain. The immediate electron acceptor for the enzyme in this species is believed to be plastoquinone. Couples the redox reaction to proton translocation, and thus conserves the redox energy in a proton gradient. The sequence is that of NAD(P)H-quinone oxidoreductase subunit 6, chloroplastic (ndhG) from Arabis hirsuta (Hairy rock-cress).